Reading from the N-terminus, the 380-residue chain is MASLRKTHPLLKIANDALVDLPTPSNISAWWNFGSLLGLCLISQILTGLFLAMHYTPDVESAFASVAHICRDVNFGWLIRNLHANGASFFFICIYFHIGRGLYYGSYLYKETWNIGVVLLLLVMMTAFVGYVLPWGQMSFWGATVITNLLSAVPYVGTTLVEWIWGGFSVDNATLTRFFAFHFLFPFVILAMTILHLLFLHETGSNNPIGLNSNADKISFHPYFSYKDLLGFAILLVALASLALFSPNLLGDPDNFTPANPMVTPPHIKPEWYFLFAYAILRSIPNKLGGVLALLASILVLMVVPFLHTSKQRTLTFRPVSQFLFWTLIADVAILTWIGGMPAEQPFIIIGQVASVLYFSLFLVFFPLAGWAENKILGWS.

The next 4 helical transmembrane spans lie at 33-53 (FGSLLGLCLISQILTGLFLAM), 77-98 (WLIRNLHANGASFFFICIYFHI), 113-133 (WNIGVVLLLLVMMTAFVGYVL), and 178-198 (FFAFHFLFPFVILAMTILHLL). H83 and H97 together coordinate heme b. H182 and H196 together coordinate heme b. H201 lines the a ubiquinone pocket. The next 4 membrane-spanning stretches (helical) occupy residues 226–246 (YKDLLGFAILLVALASLALFS), 288–308 (LGGVLALLASILVLMVVPFLH), 320–340 (VSQFLFWTLIADVAILTWIGG), and 347–367 (FIIIGQVASVLYFSLFLVFFP).

Belongs to the cytochrome b family. The cytochrome bc1 complex contains 3 respiratory subunits (MT-CYB, CYC1 and UQCRFS1), 2 core proteins (UQCRC1 and UQCRC2) and probably 6 low-molecular weight proteins. Heme b serves as cofactor.

Its subcellular location is the mitochondrion inner membrane. Its function is as follows. Component of the ubiquinol-cytochrome c reductase complex (complex III or cytochrome b-c1 complex) that is part of the mitochondrial respiratory chain. The b-c1 complex mediates electron transfer from ubiquinol to cytochrome c. Contributes to the generation of a proton gradient across the mitochondrial membrane that is then used for ATP synthesis. This Sarda sarda (Atlantic bonito) protein is Cytochrome b (mt-cyb).